Here is a 430-residue protein sequence, read N- to C-terminus: Aspartate aminotransferase, mitochondrial (430 aa).

The transit peptide at 1-29 (MALLHSARVLSGVASAFHPGLAAAASARA) directs the protein to the mitochondrion. Position 48 is a phosphothreonine (threonine 48). Lysine 59 is subject to N6-acetyllysine. Glycine 65 serves as a coordination point for substrate. Position 73 is an N6-acetyllysine; alternate (lysine 73). Lysine 73 carries the N6-succinyllysine; alternate modification. Lysine 82 bears the N6-acetyllysine mark. Lysine 90 carries the N6-acetyllysine; alternate modification. Residue lysine 90 is modified to N6-succinyllysine; alternate. Residue tyrosine 96 is modified to 3'-nitrotyrosine; alternate. Tyrosine 96 is modified (phosphotyrosine; alternate). Lysine 122 bears the N6-acetyllysine; alternate mark. At lysine 122 the chain carries N6-succinyllysine; alternate. Phosphoserine is present on serine 143. N6-acetyllysine; alternate is present on lysine 159. Lysine 159 is modified (N6-succinyllysine; alternate). Tryptophan 162 is a binding site for substrate. The residue at position 185 (lysine 185) is an N6-acetyllysine; alternate. Residue lysine 185 is modified to N6-succinyllysine; alternate. Asparagine 215 contributes to the substrate binding site. The residue at position 227 (lysine 227) is an N6-succinyllysine. The residue at position 234 (lysine 234) is an N6-acetyllysine. 2 positions are modified to N6-acetyllysine; alternate: lysine 279 and lysine 296. Residue lysine 279 is modified to N6-(pyridoxal phosphate)lysine; alternate. N6-succinyllysine; alternate is present on lysine 296. Lysine 302 carries the post-translational modification N6-acetyllysine. At lysine 309 the chain carries N6-acetyllysine; alternate. Residue lysine 309 is modified to N6-succinyllysine; alternate. Arginine 313 is modified (asymmetric dimethylarginine). Lysine 338 carries the N6-acetyllysine; alternate modification. Lysine 338 carries the post-translational modification N6-succinyllysine; alternate. Lysine 345 carries the post-translational modification N6-acetyllysine. N6-acetyllysine; alternate is present on lysine 363. Lysine 363 carries the N6-succinyllysine; alternate modification. 2 positions are modified to N6-acetyllysine: lysine 364 and lysine 387. An N6-acetyllysine; alternate mark is found at lysine 396 and lysine 404. N6-succinyllysine; alternate is present on residues lysine 396 and lysine 404. Substrate is bound at residue arginine 407.

It belongs to the class-I pyridoxal-phosphate-dependent aminotransferase family. As to quaternary structure, homodimer. The cofactor is pyridoxal 5'-phosphate.

Its subcellular location is the mitochondrion matrix. The protein localises to the cell membrane. It catalyses the reaction L-aspartate + 2-oxoglutarate = oxaloacetate + L-glutamate. The enzyme catalyses L-kynurenine + 2-oxoglutarate = kynurenate + L-glutamate + H2O. Catalyzes the irreversible transamination of the L-tryptophan metabolite L-kynurenine to form kynurenic acid (KA). As a member of the malate-aspartate shuttle, it has a key role in the intracellular NAD(H) redox balance. Is important for metabolite exchange between mitochondria and cytosol, and for amino acid metabolism. Facilitates cellular uptake of long-chain free fatty acids. The sequence is that of Aspartate aminotransferase, mitochondrial (GOT2) from Oryctolagus cuniculus (Rabbit).